The sequence spans 412 residues: G-protein coupled receptor homolog UL33 (412 aa).

The Virion surface portion of the chain corresponds to 1–35 (MDTIIHNTTNRSTDTPHVNITCNITEPLSAIRTTE). Asn7, Asn19, and Asn23 each carry an N-linked (GlcNAc...) asparagine; by host glycan. The chain crosses the membrane as a helical span at residues 36-56 (AVINTFIIFVGGPLNAIVLIT). The Intravirion segment spans residues 57-80 (QLLTNRVLGYSTPTIYMTNLYSTN). A helical transmembrane segment spans residues 81–101 (FLTLTVLPFIVLSNQWLLPAS). At 102–106 (VASCK) the chain is on the virion surface side. An intrachain disulfide couples Cys105 to Cys188. A helical membrane pass occupies residues 107-127 (FLSVIYYSSCTVGFATVALIA). Topologically, residues 128 to 147 (ADRYRVLHKRTYARQSYRST) are intravirion. A helical membrane pass occupies residues 148–168 (YIILLLTWFAGLIFSMPAAVY). Over 169–206 (TTVVIHNGTNGQSSNGHATCVLYFIADEVYTVLLSWKV) the chain is Virion surface. The helical transmembrane segment at 207–227 (LLTLVWGAAPVIMMTWFYAFF) threads the bilayer. Residues 228–244 (YSTVQRASQKQRSRTLT) are Intravirion-facing. Residues 245-265 (FVSVLLISFVALQTPYVSIMI) traverse the membrane as a helical segment. Residues 266-292 (FNSYATAAWPMDCEHLTLRRTIGTLSR) lie on the Virion surface side of the membrane. Residues 293 to 313 (LVPHLHCLINPILYALLGHDF) traverse the membrane as a helical segment. Topologically, residues 314-412 (LQRMRQCFRG…SQSHHNLSGV (99 aa)) are intravirion. The disordered stretch occupies residues 377–412 (NFPSGTWKGGQKTASNDTSTKIPHRLSQSHHNLSGV). Over residues 388–397 (KTASNDTSTK) the composition is skewed to polar residues.

The protein belongs to the G-protein coupled receptor 1 family. Heterodimerizes with US28.

The protein resides in the virion. It is found in the host cell membrane. Its subcellular location is the host cytoplasm. Its function is as follows. G-protein-coupled receptor (vGPCR) that constitutively activates multiple oncogenic signaling pathways including STAT3, AP-1, phospholipase C, NF-kappa-B or cAMP-responsive element (CRE) pathways. Plays an important role in viral reactivation from latency through activation of host CREB1, facilitating its recruitment to the viral major immediate early (MIE) genes. In turn, expression of the MIE-driven genes such as UL123 are de-repressed. Also facilitates virus dissemination via the extracellular and cell-to-cell route. In Human cytomegalovirus (strain Merlin) (HHV-5), this protein is G-protein coupled receptor homolog UL33 (UL33).